Reading from the N-terminus, the 427-residue chain is Serine--tRNA ligase 2 (427 aa).

The segment covering 35-53 (RRRSEAQAEVTRLRTELNR) has biased composition (basic and acidic residues). The segment at 35-72 (RRRSEAQAEVTRLRTELNRTSRARGRSGPPSEEEKEAA) is disordered. An L-serine-binding site is contributed by 230–232 (TAE). 261–263 (RAE) serves as a coordination point for ATP. Residue Glu284 participates in L-serine binding. 348–351 (EISS) serves as a coordination point for ATP. Ser383 is a binding site for L-serine.

Belongs to the class-II aminoacyl-tRNA synthetase family. Type-1 seryl-tRNA synthetase subfamily. Homodimer. The tRNA molecule binds across the dimer.

Its subcellular location is the cytoplasm. The catalysed reaction is tRNA(Ser) + L-serine + ATP = L-seryl-tRNA(Ser) + AMP + diphosphate + H(+). It catalyses the reaction tRNA(Sec) + L-serine + ATP = L-seryl-tRNA(Sec) + AMP + diphosphate + H(+). Its pathway is aminoacyl-tRNA biosynthesis; selenocysteinyl-tRNA(Sec) biosynthesis; L-seryl-tRNA(Sec) from L-serine and tRNA(Sec): step 1/1. Catalyzes the attachment of serine to tRNA(Ser). Is also able to aminoacylate tRNA(Sec) with serine, to form the misacylated tRNA L-seryl-tRNA(Sec), which will be further converted into selenocysteinyl-tRNA(Sec). This chain is Serine--tRNA ligase 2, found in Streptomyces avermitilis (strain ATCC 31267 / DSM 46492 / JCM 5070 / NBRC 14893 / NCIMB 12804 / NRRL 8165 / MA-4680).